A 152-amino-acid polypeptide reads, in one-letter code: Superoxide dismutase [Cu-Zn] (152 aa).

The Cu cation site is built by H45, H47, and H62. The cysteines at positions 56 and 145 are disulfide-linked. Zn(2+) is bound by residues H62, H70, H79, and D82. H119 provides a ligand contact to Cu cation.

This sequence belongs to the Cu-Zn superoxide dismutase family. In terms of assembly, homodimer. Cu cation is required as a cofactor. The cofactor is Zn(2+).

It localises to the cytoplasm. The catalysed reaction is 2 superoxide + 2 H(+) = H2O2 + O2. In terms of biological role, destroys radicals which are normally produced within the cells and which are toxic to biological systems. The polypeptide is Superoxide dismutase [Cu-Zn] (SODCC) (Brassica oleracea var. capitata (Cabbage)).